Consider the following 320-residue polypeptide: Ribose-phosphate pyrophosphokinase 3 (320 aa).

Mg(2+) is bound by residues Asp-131, His-133, Asp-142, and Asp-146.

The protein belongs to the ribose-phosphate pyrophosphokinase family.

Its subcellular location is the cytoplasm. It carries out the reaction D-ribose 5-phosphate + ATP = 5-phospho-alpha-D-ribose 1-diphosphate + AMP + H(+). It participates in metabolic intermediate biosynthesis; 5-phospho-alpha-D-ribose 1-diphosphate biosynthesis; 5-phospho-alpha-D-ribose 1-diphosphate from D-ribose 5-phosphate (route I): step 1/1. 5-phosphoribose 1-diphosphate synthase involved in nucleotide, histidine, and tryptophan biosynthesis. Active in heteromultimeric complexes with other 5-phosphoribose 1-diphosphate synthases (PRS2, PRS3, PRS4 and PRS5). The chain is Ribose-phosphate pyrophosphokinase 3 (PRS3) from Saccharomyces cerevisiae (strain ATCC 204508 / S288c) (Baker's yeast).